Reading from the N-terminus, the 164-residue chain is Kunitz-type trypsin inhibitor BrTI (164 aa).

The protein belongs to the leguminous Kunitz-type inhibitor family.

Its function is as follows. Inhibitor of trypsin and human plasma kallikrein with a Ki of 2.9 nM and 14.0 nM, respectively. Does not inhibit chymotrypsin, porcine pancreatic elastas, human neutrophil elastase, coagulation factor Xa, human thrombin, porcine pancreatic kallikrein or plasmin. The polypeptide is Kunitz-type trypsin inhibitor BrTI (Bauhinia rufa (Orchid tree)).